A 352-amino-acid chain; its full sequence is Phosphoribosylformylglycinamidine cyclo-ligase (352 aa).

This sequence belongs to the AIR synthase family.

It is found in the cytoplasm. It carries out the reaction 2-formamido-N(1)-(5-O-phospho-beta-D-ribosyl)acetamidine + ATP = 5-amino-1-(5-phospho-beta-D-ribosyl)imidazole + ADP + phosphate + H(+). It functions in the pathway purine metabolism; IMP biosynthesis via de novo pathway; 5-amino-1-(5-phospho-D-ribosyl)imidazole from N(2)-formyl-N(1)-(5-phospho-D-ribosyl)glycinamide: step 2/2. The polypeptide is Phosphoribosylformylglycinamidine cyclo-ligase (Stenotrophomonas maltophilia (strain K279a)).